A 392-amino-acid chain; its full sequence is Leucine aminopeptidase 1 (392 aa).

The first 18 residues, 1–18 (MKFSQASLLAACLPAISA), serve as a signal peptide directing secretion. The propeptide occupies 19-82 (RFIETAEADN…LGSTRLNAQT (64 aa)). N-linked (GlcNAc...) asparagine glycosylation is present at Asn-174. Residues His-182, Asp-201, Glu-240, and Asp-267 each contribute to the Zn(2+) site. Cys-316 and Cys-320 form a disulfide bridge. His-349 contributes to the Zn(2+) binding site.

The protein belongs to the peptidase M28 family. M28E subfamily. As to quaternary structure, monomer. It depends on Zn(2+) as a cofactor.

The protein localises to the secreted. Its function is as follows. Extracellular aminopeptidase that allows assimilation of proteinaceous substrates. The polypeptide is Leucine aminopeptidase 1 (LAP1) (Fusarium vanettenii (strain ATCC MYA-4622 / CBS 123669 / FGSC 9596 / NRRL 45880 / 77-13-4) (Fusarium solani subsp. pisi)).